Consider the following 126-residue polypeptide: S-adenosylmethionine decarboxylase proenzyme (126 aa).

Ser63 acts as the Schiff-base intermediate with substrate; via pyruvic acid in catalysis. Ser63 bears the Pyruvic acid (Ser); by autocatalysis mark. The Proton acceptor; for processing activity role is filled by His68. Cys83 (proton donor; for catalytic activity) is an active-site residue.

This sequence belongs to the prokaryotic AdoMetDC family. Type 1 subfamily. As to quaternary structure, heterotetramer of two alpha and two beta chains arranged as a dimer of alpha/beta heterodimers. Pyruvate is required as a cofactor. In terms of processing, is synthesized initially as an inactive proenzyme. Formation of the active enzyme involves a self-maturation process in which the active site pyruvoyl group is generated from an internal serine residue via an autocatalytic post-translational modification. Two non-identical subunits are generated from the proenzyme in this reaction, and the pyruvate is formed at the N-terminus of the alpha chain, which is derived from the carboxyl end of the proenzyme. The post-translation cleavage follows an unusual pathway, termed non-hydrolytic serinolysis, in which the side chain hydroxyl group of the serine supplies its oxygen atom to form the C-terminus of the beta chain, while the remainder of the serine residue undergoes an oxidative deamination to produce ammonia and the pyruvoyl group blocking the N-terminus of the alpha chain.

The enzyme catalyses S-adenosyl-L-methionine + H(+) = S-adenosyl 3-(methylsulfanyl)propylamine + CO2. It participates in amine and polyamine biosynthesis; S-adenosylmethioninamine biosynthesis; S-adenosylmethioninamine from S-adenosyl-L-methionine: step 1/1. In terms of biological role, catalyzes the decarboxylation of S-adenosylmethionine to S-adenosylmethioninamine (dcAdoMet), the propylamine donor required for the synthesis of the polyamines spermine and spermidine from the diamine putrescine. The protein is S-adenosylmethionine decarboxylase proenzyme of Clostridium tetani (strain Massachusetts / E88).